Reading from the N-terminus, the 194-residue chain is uncharacterized protein (194 aa).

Belongs to the calycin superfamily. Fatty-acid binding protein (FABP) family.

This is an uncharacterized protein from Caenorhabditis elegans.